The chain runs to 727 residues: Prolyl endopeptidase-like (727 aa).

Residues Ser559, Asp645, and His690 each act as charge relay system in the active site.

This sequence belongs to the peptidase S9A family. As to quaternary structure, homodimer. Interacts with the AP-1 complex.

It localises to the cytoplasm. The protein resides in the cytosol. The protein localises to the golgi apparatus. It is found in the trans-Golgi network. Its subcellular location is the cytoskeleton. It localises to the nucleus. Its function is as follows. Serine peptidase whose precise substrate specificity remains unclear. Does not cleave peptides after a arginine or lysine residue. Regulates trans-Golgi network morphology and sorting by regulating the membrane binding of the AP-1 complex. May play a role in the regulation of synaptic vesicle exocytosis. The protein is Prolyl endopeptidase-like (PREPL) of Pongo abelii (Sumatran orangutan).